We begin with the raw amino-acid sequence, 225 residues long: Small ribosomal subunit protein uS3 (225 aa).

One can recognise a KH type-2 domain in the interval 38–106; that stretch reads IRKFVQNRFN…PVNLNIIEVK (69 aa).

The protein belongs to the universal ribosomal protein uS3 family. In terms of assembly, part of the 30S ribosomal subunit. Forms a tight complex with proteins S10 and S14.

Its function is as follows. Binds the lower part of the 30S subunit head. Binds mRNA in the 70S ribosome, positioning it for translation. The chain is Small ribosomal subunit protein uS3 from Leptospira interrogans serogroup Icterohaemorrhagiae serovar copenhageni (strain Fiocruz L1-130).